Consider the following 171-residue polypeptide: Transcription antitermination protein NusB (171 aa).

Belongs to the NusB family.

Involved in transcription antitermination. Required for transcription of ribosomal RNA (rRNA) genes. Binds specifically to the boxA antiterminator sequence of the ribosomal RNA (rrn) operons. The polypeptide is Transcription antitermination protein NusB (Brucella suis (strain ATCC 23445 / NCTC 10510)).